The chain runs to 232 residues: Large ribosomal subunit protein uL1 (232 aa).

Belongs to the universal ribosomal protein uL1 family. Part of the 50S ribosomal subunit.

In terms of biological role, binds directly to 23S rRNA. The L1 stalk is quite mobile in the ribosome, and is involved in E site tRNA release. Its function is as follows. Protein L1 is also a translational repressor protein, it controls the translation of the L11 operon by binding to its mRNA. This is Large ribosomal subunit protein uL1 from Levilactobacillus brevis (strain ATCC 367 / BCRC 12310 / CIP 105137 / JCM 1170 / LMG 11437 / NCIMB 947 / NCTC 947) (Lactobacillus brevis).